The following is a 767-amino-acid chain: uncharacterized protein (767 aa).

3 disordered regions span residues Leu-171–Pro-209, Glu-314–Glu-340, and Arg-533–Phe-566. Basic and acidic residues-rich tracts occupy residues Pro-322–Lys-331 and Glu-552–Arg-564.

This is an uncharacterized protein from Homo sapiens (Human).